The chain runs to 198 residues: Peptide deformylase (198 aa).

Fe cation is bound by residues Cys-123 and His-167. Residue Glu-168 is part of the active site. His-171 serves as a coordination point for Fe cation.

Belongs to the polypeptide deformylase family. Fe(2+) is required as a cofactor.

It catalyses the reaction N-terminal N-formyl-L-methionyl-[peptide] + H2O = N-terminal L-methionyl-[peptide] + formate. Its function is as follows. Removes the formyl group from the N-terminal Met of newly synthesized proteins. Requires at least a dipeptide for an efficient rate of reaction. N-terminal L-methionine is a prerequisite for activity but the enzyme has broad specificity at other positions. The protein is Peptide deformylase of Ureaplasma parvum serovar 3 (strain ATCC 27815 / 27 / NCTC 11736).